Reading from the N-terminus, the 305-residue chain is Myb-like transcriptional regulator basR (305 aa).

3 consecutive Myb-like domains span residues 5-59 (RRRW…YNRF), 60-110 (TGGL…HHCL), and 111-162 (NPEL…TILS). The interval 175–215 (PCCDSPSPSKSSRRPPSTPTSTPQVPGSRQGSSYDPYDYGS) is disordered. Positions 198-207 (QVPGSRQGSS) are enriched in polar residues.

Its subcellular location is the nucleus. In terms of biological role, transcription regulator that acts as a central regulatory node for the integration of external bacterial signals leading to the regulation of secondary metabolite gene clusters such as orsellinic, lecanoric acid, cichorine, 2,4-dihydroxy-3-methyl-6-(2-oxopropyl)benzaldehyde (dba), emericellamide or microperfuranone clusters. This is Myb-like transcriptional regulator basR from Emericella nidulans (strain FGSC A4 / ATCC 38163 / CBS 112.46 / NRRL 194 / M139) (Aspergillus nidulans).